Consider the following 66-residue polypeptide: Cytochrome b-c1 complex subunit 9, mitochondrial (66 aa).

The Mitochondrial matrix portion of the chain corresponds to 2–17 (SFSSLYKTFFKRNAVF). The helical transmembrane segment at 18–43 (VGTIFAGAFVFQTVFDTAITSWYENH) threads the bilayer. The Mitochondrial intermembrane portion of the chain corresponds to 44–66 (NKGKLWKDVKARIAAGDGDDDDE).

It belongs to the UQCR10/QCR9 family. In terms of assembly, component of the ubiquinol-cytochrome c oxidoreductase (cytochrome b-c1 complex, complex III, CIII), a multisubunit enzyme composed of 10 subunits. The complex is composed of 3 respiratory subunits cytochrome b (COB), cytochrome c1 (CYT1) and Rieske protein (RIP1), 2 core protein subunits COR1 and QCR2, and 5 low-molecular weight protein subunits QCR6, QCR7, QCR8, QCR9 and QCR10. The complex exists as an obligatory dimer and forms supercomplexes (SCs) in the inner mitochondrial membrane with a monomer or a dimer of cytochrome c oxidase (complex IV, CIV), resulting in 2 different assemblies (supercomplexes III(2)IV and III(2)IV(2)). Interacts with the transmembrane segment of RIP1.

Its subcellular location is the mitochondrion inner membrane. Its function is as follows. Component of the ubiquinol-cytochrome c oxidoreductase, a multisubunit transmembrane complex that is part of the mitochondrial electron transport chain which drives oxidative phosphorylation. The respiratory chain contains 3 multisubunit complexes succinate dehydrogenase (complex II, CII), ubiquinol-cytochrome c oxidoreductase (cytochrome b-c1 complex, complex III, CIII) and cytochrome c oxidase (complex IV, CIV), that cooperate to transfer electrons derived from NADH and succinate to molecular oxygen, creating an electrochemical gradient over the inner membrane that drives transmembrane transport and the ATP synthase. The cytochrome b-c1 complex catalyzes electron transfer from ubiquinol to cytochrome c, linking this redox reaction to translocation of protons across the mitochondrial inner membrane, with protons being carried across the membrane as hydrogens on the quinol. In the process called Q cycle, 2 protons are consumed from the matrix, 4 protons are released into the intermembrane space and 2 electrons are passed to cytochrome c. This Saccharomyces cerevisiae (strain ATCC 204508 / S288c) (Baker's yeast) protein is Cytochrome b-c1 complex subunit 9, mitochondrial (QCR9).